A 1018-amino-acid polypeptide reads, in one-letter code: Probable inorganic carbon transporter subunit DabA 2 (1018 aa).

Zn(2+)-binding residues include Cys489, Asp491, His674, and Cys689.

It belongs to the inorganic carbon transporter (TC 9.A.2) DabA family. In terms of assembly, forms a complex with DabB. The cofactor is Zn(2+).

Its subcellular location is the cell inner membrane. In terms of biological role, part of an energy-coupled inorganic carbon pump. The sequence is that of Probable inorganic carbon transporter subunit DabA 2 from Sorangium cellulosum (strain So ce56) (Polyangium cellulosum (strain So ce56)).